The following is a 232-amino-acid chain: Large ribosomal subunit protein uL16m (232 aa).

The N-terminal 41 residues, 1-41 (MFPYLTRMNLSIKMGGLTLKESSPNAFLNNTTIARRFKHEY), are a transit peptide targeting the mitochondrion.

This sequence belongs to the universal ribosomal protein uL16 family. Component of the mitochondrial large ribosomal subunit (mt-LSU). Mature yeast 74S mitochondrial ribosomes consist of a small (37S) and a large (54S) subunit. The 37S small subunit contains a 15S ribosomal RNA (15S mt-rRNA) and 34 different proteins. The 54S large subunit contains a 21S rRNA (21S mt-rRNA) and 46 different proteins.

The protein localises to the mitochondrion. In terms of biological role, component of the mitochondrial ribosome (mitoribosome), a dedicated translation machinery responsible for the synthesis of mitochondrial genome-encoded proteins, including at least some of the essential transmembrane subunits of the mitochondrial respiratory chain. The mitoribosomes are attached to the mitochondrial inner membrane and translation products are cotranslationally integrated into the membrane. This is Large ribosomal subunit protein uL16m (MRPL16) from Saccharomyces cerevisiae (strain ATCC 204508 / S288c) (Baker's yeast).